Reading from the N-terminus, the 132-residue chain is Small ribosomal subunit protein uS8 (132 aa).

The protein belongs to the universal ribosomal protein uS8 family. Part of the 30S ribosomal subunit. Contacts proteins S5 and S12.

Its function is as follows. One of the primary rRNA binding proteins, it binds directly to 16S rRNA central domain where it helps coordinate assembly of the platform of the 30S subunit. The protein is Small ribosomal subunit protein uS8 of Streptococcus suis (strain 98HAH33).